The chain runs to 572 residues: Cuticlin-6 (572 aa).

An N-terminal signal peptide occupies residues 1 to 24 (MRPIPYDISLSITSFLSLILICSA). The Extracellular segment spans residues 25-541 (NPIDNGLVDS…PLPYPLINTN (517 aa)). One can recognise a VWFA domain in the interval 47 to 216 (EVILLLDASG…QLDRALADSL (170 aa)). N78 carries N-linked (GlcNAc...) asparagine glycosylation. One can recognise a ZP domain in the interval 233 to 479 (ICGPDRIGVK…GGCEGITPPQ (247 aa)). Residues 542-562 (LWIMGIITLTNIFVFILTVWF) traverse the membrane as a helical segment. At 563–572 (TFRKRRCKPA) the chain is on the cytoplasmic side.

The protein localises to the cell membrane. Functionally, plays a role in alae formation in dauer larvae probably by regulating cuticle assembly. The protein is Cuticlin-6 of Caenorhabditis elegans.